The sequence spans 460 residues: V-type ATP synthase beta chain 2 (460 aa).

The protein belongs to the ATPase alpha/beta chains family.

Produces ATP from ADP in the presence of a proton gradient across the membrane. The V-type beta chain is a regulatory subunit. The chain is V-type ATP synthase beta chain 2 from Clostridium tetani (strain Massachusetts / E88).